Consider the following 119-residue polypeptide: uncharacterized protein (119 aa).

The helical transmembrane segment at 74–91 (LSVHFLLNVISAILSMLI) threads the bilayer.

It localises to the membrane. This is an uncharacterized protein from Schizosaccharomyces pombe (strain 972 / ATCC 24843) (Fission yeast).